Here is a 680-residue protein sequence, read N- to C-terminus: DNA ligase (680 aa).

NAD(+) contacts are provided by residues 35–39 (DADFD), 86–87 (SL), and glutamate 111. The active-site N6-AMP-lysine intermediate is lysine 113. Residues arginine 134, glutamate 174, lysine 290, and lysine 314 each contribute to the NAD(+) site. The Zn(2+) site is built by cysteine 408, cysteine 411, cysteine 427, and cysteine 433. The BRCT domain maps to 597–680 (VAEQTLEGLT…RLLNTGSADE (84 aa)).

It belongs to the NAD-dependent DNA ligase family. LigA subfamily. The cofactor is Mg(2+). Mn(2+) serves as cofactor.

The enzyme catalyses NAD(+) + (deoxyribonucleotide)n-3'-hydroxyl + 5'-phospho-(deoxyribonucleotide)m = (deoxyribonucleotide)n+m + AMP + beta-nicotinamide D-nucleotide.. In terms of biological role, DNA ligase that catalyzes the formation of phosphodiester linkages between 5'-phosphoryl and 3'-hydroxyl groups in double-stranded DNA using NAD as a coenzyme and as the energy source for the reaction. It is essential for DNA replication and repair of damaged DNA. This is DNA ligase from Corynebacterium glutamicum (strain ATCC 13032 / DSM 20300 / JCM 1318 / BCRC 11384 / CCUG 27702 / LMG 3730 / NBRC 12168 / NCIMB 10025 / NRRL B-2784 / 534).